The primary structure comprises 273 residues: Ribosomal RNA small subunit methyltransferase A (273 aa).

S-adenosyl-L-methionine contacts are provided by histidine 10, leucine 12, glycine 37, glutamate 58, aspartate 83, and asparagine 108.

This sequence belongs to the class I-like SAM-binding methyltransferase superfamily. rRNA adenine N(6)-methyltransferase family. RsmA subfamily.

Its subcellular location is the cytoplasm. It catalyses the reaction adenosine(1518)/adenosine(1519) in 16S rRNA + 4 S-adenosyl-L-methionine = N(6)-dimethyladenosine(1518)/N(6)-dimethyladenosine(1519) in 16S rRNA + 4 S-adenosyl-L-homocysteine + 4 H(+). Functionally, specifically dimethylates two adjacent adenosines (A1518 and A1519) in the loop of a conserved hairpin near the 3'-end of 16S rRNA in the 30S particle. May play a critical role in biogenesis of 30S subunits. In Picosynechococcus sp. (strain ATCC 27264 / PCC 7002 / PR-6) (Agmenellum quadruplicatum), this protein is Ribosomal RNA small subunit methyltransferase A.